We begin with the raw amino-acid sequence, 176 residues long: Peptide methionine sulfoxide reductase B3 (176 aa).

Positions methionine 1 to serine 26 are cleaved as a signal peptide. One can recognise a MsrB domain in the interval aspartate 51 to alanine 172. Residues cysteine 90, cysteine 93, cysteine 136, and cysteine 139 each contribute to the Zn(2+) site. An intrachain disulfide couples cysteine 108 to cysteine 161. Cysteine 161 serves as the catalytic Nucleophile.

The protein belongs to the MsrB Met sulfoxide reductase family. It depends on Zn(2+) as a cofactor.

The protein resides in the endoplasmic reticulum. The enzyme catalyses L-methionyl-[protein] + [thioredoxin]-disulfide + H2O = L-methionyl-(R)-S-oxide-[protein] + [thioredoxin]-dithiol. Functionally, catalyzes the reduction of methionine sulfoxide (MetSO) to methionine in proteins. Plays a protective role against oxidative stress by restoring activity to proteins that have been inactivated by methionine oxidation. Involved in cold tolerance. Eliminates MetSO and reactive oxygen species that accumulate at the ER during cold acclimation. MSRB family specifically reduces the MetSO R-enantiomer. This Arabidopsis thaliana (Mouse-ear cress) protein is Peptide methionine sulfoxide reductase B3 (MSRB3).